We begin with the raw amino-acid sequence, 589 residues long: Arylsulfatase L (589 aa).

An N-terminal signal peptide occupies residues methionine 1–serine 31. Residues aspartate 46 and aspartate 47 each contribute to the Ca(2+) site. An N-linked (GlcNAc...) asparagine glycan is attached at asparagine 58. Residue cysteine 86 participates in Ca(2+) binding. Cysteine 86 acts as the Nucleophile in catalysis. Cysteine 86 is subject to 3-oxoalanine (Cys). Asparagine 125 carries N-linked (GlcNAc...) asparagine glycosylation. Lysine 145 provides a ligand contact to substrate. The active site involves histidine 147. N-linked (GlcNAc...) asparagine glycosylation is present at asparagine 258. Histidine 301 contributes to the substrate binding site. Residue asparagine 344 is glycosylated (N-linked (GlcNAc...) asparagine). The Ca(2+) site is built by aspartate 353 and histidine 354. Lysine 378 provides a ligand contact to substrate.

Belongs to the sulfatase family. The cofactor is Ca(2+). N-glycosylated. In terms of processing, the conversion to 3-oxoalanine (also known as C-formylglycine, FGly), of a serine or cysteine residue in prokaryotes and of a cysteine residue in eukaryotes, is critical for catalytic activity. Expressed in the pancreas, liver and kidney.

It localises to the golgi apparatus. Its subcellular location is the golgi stack. It carries out the reaction an aryl sulfate + H2O = a phenol + sulfate + H(+). Its activity is regulated as follows. Inhibited by millimolar concentrations of warfarin. In terms of biological role, exhibits arylsulfatase activity towards the artificial substrate 4-methylumbelliferyl sulfate. May be essential for the correct composition of cartilage and bone matrix during development. Has no activity toward steroid sulfates. The protein is Arylsulfatase L of Homo sapiens (Human).